The sequence spans 409 residues: Elongation factor Tu (409 aa).

In terms of domain architecture, tr-type G spans 10–214 (KPHVNIGTIG…EVDAYIPEPE (205 aa)). The tract at residues 19–26 (GHVDHGKT) is G1. Residue 19–26 (GHVDHGKT) coordinates GTP. Threonine 26 serves as a coordination point for Mg(2+). The interval 60-64 (GITIN) is G2. The tract at residues 81-84 (DCPG) is G3. Residues 81–85 (DCPGH) and 136–139 (NKQD) contribute to the GTP site. The interval 136–139 (NKQD) is G4. Positions 174-176 (SAL) are G5.

Belongs to the TRAFAC class translation factor GTPase superfamily. Classic translation factor GTPase family. EF-Tu/EF-1A subfamily. In terms of assembly, monomer.

The protein localises to the cytoplasm. It carries out the reaction GTP + H2O = GDP + phosphate + H(+). GTP hydrolase that promotes the GTP-dependent binding of aminoacyl-tRNA to the A-site of ribosomes during protein biosynthesis. This Rippkaea orientalis (strain PCC 8801 / RF-1) (Cyanothece sp. (strain PCC 8801)) protein is Elongation factor Tu.